Reading from the N-terminus, the 157-residue chain is Transcriptional repressor NrdR (157 aa).

The interval 1–22 is disordered; the sequence is MKCPYCSSPDSRVINSRPSDDG. A zinc finger lies at 3–34; it reads CPYCSSPDSRVINSRPSDDGASIRRRRECLTC. Residues 8-17 show a composition bias toward polar residues; the sequence is SPDSRVINSR. One can recognise an ATP-cone domain in the interval 49 to 136; the sequence is LMVVKRSGVR…VYRDFDSLER (88 aa).

The protein belongs to the NrdR family. Zn(2+) serves as cofactor.

In terms of biological role, negatively regulates transcription of bacterial ribonucleotide reductase nrd genes and operons by binding to NrdR-boxes. This chain is Transcriptional repressor NrdR, found in Deinococcus radiodurans (strain ATCC 13939 / DSM 20539 / JCM 16871 / CCUG 27074 / LMG 4051 / NBRC 15346 / NCIMB 9279 / VKM B-1422 / R1).